We begin with the raw amino-acid sequence, 234 residues long: Uridylate kinase (234 aa).

Residue 9–12 coordinates ATP; that stretch reads KLSG. Glycine 51 is a UMP binding site. The ATP site is built by glycine 52 and arginine 56. UMP-binding positions include aspartate 71 and 132 to 139; that span reads CGNPFFTT. The ATP site is built by threonine 159, tyrosine 165, and aspartate 168.

The protein belongs to the UMP kinase family. In terms of assembly, homohexamer.

The protein resides in the cytoplasm. The catalysed reaction is UMP + ATP = UDP + ADP. It functions in the pathway pyrimidine metabolism; CTP biosynthesis via de novo pathway; UDP from UMP (UMPK route): step 1/1. Inhibited by UTP. Its function is as follows. Catalyzes the reversible phosphorylation of UMP to UDP. This chain is Uridylate kinase, found in Prochlorococcus marinus (strain MIT 9215).